The primary structure comprises 261 residues: uncharacterized protein (261 aa).

A run of 2 helical transmembrane segments spans residues 4–21 and 33–55; these read RLIAIATFVVTFGILIVL and FSILSILAAVLTIAAYFFTLVLF.

The protein localises to the cell membrane. This is an uncharacterized protein from Archaeoglobus fulgidus (strain ATCC 49558 / DSM 4304 / JCM 9628 / NBRC 100126 / VC-16).